The following is a 251-amino-acid chain: Phosphoribosylaminoimidazole-succinocarboxamide synthase (251 aa).

This sequence belongs to the SAICAR synthetase family.

It carries out the reaction 5-amino-1-(5-phospho-D-ribosyl)imidazole-4-carboxylate + L-aspartate + ATP = (2S)-2-[5-amino-1-(5-phospho-beta-D-ribosyl)imidazole-4-carboxamido]succinate + ADP + phosphate + 2 H(+). It functions in the pathway purine metabolism; IMP biosynthesis via de novo pathway; 5-amino-1-(5-phospho-D-ribosyl)imidazole-4-carboxamide from 5-amino-1-(5-phospho-D-ribosyl)imidazole-4-carboxylate: step 1/2. The protein is Phosphoribosylaminoimidazole-succinocarboxamide synthase of Phenylobacterium zucineum (strain HLK1).